The following is a 122-amino-acid chain: U1 small nuclear ribonucleoprotein C (122 aa).

A Matrin-type zinc finger spans residues 4-36 (YFCDYCDTYLTHDSPSVRKTHCSGRKHKDNVKM).

It belongs to the U1 small nuclear ribonucleoprotein C family. In terms of assembly, U1 snRNP is composed of the 7 core Sm proteins B/B', D1, D2, D3, E, F and G that assemble in a heptameric protein ring on the Sm site of the small nuclear RNA to form the core snRNP, and at least 3 U1 snRNP-specific proteins U1-70K, U1-A and U1-C. U1-C interacts with U1 snRNA and the 5' splice-site region of the pre-mRNA.

The protein resides in the nucleus. In terms of biological role, component of the spliceosomal U1 snRNP, which is essential for recognition of the pre-mRNA 5' splice-site and the subsequent assembly of the spliceosome. U1-C is directly involved in initial 5' splice-site recognition for both constitutive and regulated alternative splicing. The interaction with the 5' splice-site seems to precede base-pairing between the pre-mRNA and the U1 snRNA. Stimulates commitment or early (E) complex formation by stabilizing the base pairing of the 5' end of the U1 snRNA and the 5' splice-site region. The sequence is that of U1 small nuclear ribonucleoprotein C from Ciona intestinalis (Transparent sea squirt).